The primary structure comprises 484 residues: tRNA sulfurtransferase (484 aa).

One can recognise a THUMP domain in the interval 63–167 (EAFGERLACI…NEQLYLVDKR (105 aa)). ATP contacts are provided by residues 185–186 (LI), Lys267, Gly289, and Gln298. A disulfide bridge links Cys346 with Cys458. Positions 406-484 (ISADEVIIDV…GYSNVKVYRP (79 aa)) constitute a Rhodanese domain. Cys458 serves as the catalytic Cysteine persulfide intermediate.

This sequence belongs to the ThiI family.

Its subcellular location is the cytoplasm. It carries out the reaction [ThiI sulfur-carrier protein]-S-sulfanyl-L-cysteine + a uridine in tRNA + 2 reduced [2Fe-2S]-[ferredoxin] + ATP + H(+) = [ThiI sulfur-carrier protein]-L-cysteine + a 4-thiouridine in tRNA + 2 oxidized [2Fe-2S]-[ferredoxin] + AMP + diphosphate. It catalyses the reaction [ThiS sulfur-carrier protein]-C-terminal Gly-Gly-AMP + S-sulfanyl-L-cysteinyl-[cysteine desulfurase] + AH2 = [ThiS sulfur-carrier protein]-C-terminal-Gly-aminoethanethioate + L-cysteinyl-[cysteine desulfurase] + A + AMP + 2 H(+). The protein operates within cofactor biosynthesis; thiamine diphosphate biosynthesis. Functionally, catalyzes the ATP-dependent transfer of a sulfur to tRNA to produce 4-thiouridine in position 8 of tRNAs, which functions as a near-UV photosensor. Also catalyzes the transfer of sulfur to the sulfur carrier protein ThiS, forming ThiS-thiocarboxylate. This is a step in the synthesis of thiazole, in the thiamine biosynthesis pathway. The sulfur is donated as persulfide by IscS. The sequence is that of tRNA sulfurtransferase from Shewanella piezotolerans (strain WP3 / JCM 13877).